Reading from the N-terminus, the 202-residue chain is ATP-dependent Clp protease proteolytic subunit (202 aa).

Ser106 acts as the Nucleophile in catalysis. The active site involves His131.

This sequence belongs to the peptidase S14 family. In terms of assembly, fourteen ClpP subunits assemble into 2 heptameric rings which stack back to back to give a disk-like structure with a central cavity, resembling the structure of eukaryotic proteasomes.

It is found in the cytoplasm. The catalysed reaction is Hydrolysis of proteins to small peptides in the presence of ATP and magnesium. alpha-casein is the usual test substrate. In the absence of ATP, only oligopeptides shorter than five residues are hydrolyzed (such as succinyl-Leu-Tyr-|-NHMec, and Leu-Tyr-Leu-|-Tyr-Trp, in which cleavage of the -Tyr-|-Leu- and -Tyr-|-Trp bonds also occurs).. Its function is as follows. Cleaves peptides in various proteins in a process that requires ATP hydrolysis. Has a chymotrypsin-like activity. Plays a major role in the degradation of misfolded proteins. In Shewanella sp. (strain ANA-3), this protein is ATP-dependent Clp protease proteolytic subunit.